The following is a 527-amino-acid chain: Transcriptional regulator ATRX (527 aa).

Positions 1–527 (GRSVVEFGDM…RSYKQKKKRR (527 aa)) are disordered. The span at 14 to 23 (RQQSAVSSAG) shows a compositional bias: polar residues. Basic and acidic residues predominate over residues 27–46 (PSGKEENVHSPEDKRVTKSK). The segment covering 47–59 (EKSKHLRTRTGRK) has biased composition (basic residues). Residues 60–84 (VKSDVTDRFRKKEQSSESSEGEKKQ) show a composition bias toward basic and acidic residues. Residues serine 62 and serine 74 each carry the phosphoserine modification. Basic residues predominate over residues 85-94 (GRQRTGTRGK). Basic and acidic residues-rich tracts occupy residues 95 to 122 (KSTDLKEEKVKREREYESSSDGTEKLPE), 136 to 145 (NKNDTTDEAK), 152 to 194 (DKSC…EKKQ), and 204 to 250 (KRPE…KEVK). Residue lysine 105 forms a Glycyl lysine isopeptide (Lys-Gly) (interchain with G-Cter in SUMO2) linkage. Phosphoserine occurs at positions 112, 113, and 114. Serine 162 carries the phosphoserine modification. Arginine 184 is modified (citrulline). Basic residues predominate over residues 267–297 (KQKKQRMSAKKKNSNTKERKRKSLRATTTKR). The tract at residues 290–427 (LRATTTKRKQ…SNQVNSESDS (138 aa)) is interaction with DAXX. Phosphoserine occurs at positions 345, 346, and 354. The segment covering 368–382 (PENRIAKKMLLEEIK) has biased composition (basic and acidic residues). Residues 387–398 (SDEDGSSDDEPK) are compositionally biased toward acidic residues. Residues 399-410 (EGEKKRIGKQSE) are compositionally biased toward basic and acidic residues. Residues serine 423, serine 425, and serine 427 each carry the phosphoserine modification. A compositionally biased stretch (basic residues) spans 435–446 (PRYRHRLLRHKL). Phosphoserine occurs at positions 449 and 453. 2 stretches are compositionally biased toward basic and acidic residues: residues 454–469 (GGEKKTKPKEHKETKG) and 509–518 (KKAELEENQR).

Belongs to the SNF2/RAD54 helicase family. Interacts with DAXX to form the chromatin remodeling complex ATRX:DAXX. Probably binds EZH2. Binds annexin V in a calcium and phosphatidylcholine/phosphatidylserine-dependent manner. Interacts directly with CBX5 via the PxVxL motif. Interacts with RAD50, MRE11 and NBN; indicative for an association with the MRN complex. Interacts with histone MACROH2A1. Interacts with histone H3 peptides methylated at 'Lys-10' with preferences H3K9me3 &gt; H3K9me2 &gt; H3K9me1. Interacts with histone H3 peptides unmethylated at 'Lys-5' (H3K4me0). Interacts with MECP2, SMC1 and SMC3. Interacts with SETDB1, TRIM28 and ZNF274. In terms of processing, citrullinated by PADI4.

It localises to the nucleus. Its subcellular location is the chromosome. The protein localises to the telomere. The protein resides in the PML body. The catalysed reaction is ATP + H2O = ADP + phosphate + H(+). Involved in transcriptional regulation and chromatin remodeling. Facilitates DNA replication in multiple cellular environments and is required for efficient replication of a subset of genomic loci. Binds to DNA tandem repeat sequences in both telomeres and euchromatin and in vitro binds DNA quadruplex structures. May help stabilizing G-rich regions into regular chromatin structures by remodeling G4 DNA and incorporating H3.3-containing nucleosomes. Catalytic component of the chromatin remodeling complex ATRX:DAXX which has ATP-dependent DNA translocase activity and catalyzes the replication-independent deposition of histone H3.3 in pericentric DNA repeats outside S-phase and telomeres, and the in vitro remodeling of H3.3-containing nucleosomes. Its heterochromatin targeting is proposed to involve a combinatorial readout of histone H3 modifications (specifically methylation states of H3K9 and H3K4) and association with CBX5. Involved in maintaining telomere structural integrity in embryonic stem cells probably implying recruitment of CBX5 to telomeres. May be involved in transcriptional regulation of telomeric repeat-containing RNA (TERRA). Acts as a negative regulator of chromatin incorporation of transcriptionally repressive histone MACROH2A1, particularily at telomeres. Participates in the allele-specific gene expression at the imprinted IGF2/H19 gene locus. On the maternal allele, required for the chromatin occupancy of SMC1 and CTCTF within the H19 imprinting control region (ICR) and involved in esatblishment of histone tails modifications in the ICR. Binds to zinc-finger coding genes with atypical chromatin signatures and regulates its H3K9me3 levels. Forms a complex with ZNF274, TRIM28 and SETDB1 to facilitate the deposition and maintenance of H3K9me3 at the 3' exons of zinc-finger genes. This Rattus norvegicus (Rat) protein is Transcriptional regulator ATRX (Atrx).